A 402-amino-acid polypeptide reads, in one-letter code: Phosphoglycerate kinase (402 aa).

Substrate-binding positions include 29 to 31 (DFN), R45, 69 to 72 (HLGR), R125, and R158. Residues K209, E331, and 357–360 (GGDT) contribute to the ATP site.

This sequence belongs to the phosphoglycerate kinase family.

It is found in the cytoplasm. It carries out the reaction (2R)-3-phosphoglycerate + ATP = (2R)-3-phospho-glyceroyl phosphate + ADP. It participates in carbohydrate degradation; glycolysis; pyruvate from D-glyceraldehyde 3-phosphate: step 2/5. The sequence is that of Phosphoglycerate kinase (pgk) from Helicobacter pylori (strain J99 / ATCC 700824) (Campylobacter pylori J99).